A 389-amino-acid chain; its full sequence is D(-)-tartrate dehydratase (389 aa).

Substrate-binding positions include N21, N55, K102, Y156, K182, K182–K184, D213–N215, E239, E265, H322, and E341–Y343. The acceptor role is filled by K184. Residues D213, E239, and E265 each contribute to the Mg(2+) site. H322 functions as the Proton donor/acceptor in the catalytic mechanism.

It belongs to the mandelate racemase/muconate lactonizing enzyme family. In terms of assembly, homooctamer; tetramer of dimers. Requires Mg(2+) as cofactor.

The catalysed reaction is (S,S)-tartrate = oxaloacetate + H2O. Its function is as follows. Catalyzes the dehydration of D-tartrate to oxaloacetate. The sequence is that of D(-)-tartrate dehydratase (tarD) from Bradyrhizobium diazoefficiens (strain JCM 10833 / BCRC 13528 / IAM 13628 / NBRC 14792 / USDA 110).